The chain runs to 395 residues: 8-amino-7-oxononanoate synthase (395 aa).

Substrate is bound at residue arginine 24. A pyridoxal 5'-phosphate-binding site is contributed by 111–112 (GF). Residue histidine 136 coordinates substrate. Residues serine 184, 209–212 (DDAH), and 240–243 (TLSK) contribute to the pyridoxal 5'-phosphate site. Lysine 243 is modified (N6-(pyridoxal phosphate)lysine). Threonine 357 is a binding site for substrate.

Belongs to the class-II pyridoxal-phosphate-dependent aminotransferase family. BioF subfamily. Homodimer. Requires pyridoxal 5'-phosphate as cofactor.

It carries out the reaction 6-carboxyhexanoyl-[ACP] + L-alanine + H(+) = (8S)-8-amino-7-oxononanoate + holo-[ACP] + CO2. Its pathway is cofactor biosynthesis; biotin biosynthesis. Its function is as follows. Catalyzes the decarboxylative condensation of pimeloyl-[acyl-carrier protein] and L-alanine to produce 8-amino-7-oxononanoate (AON), [acyl-carrier protein], and carbon dioxide. The sequence is that of 8-amino-7-oxononanoate synthase from Thermoanaerobacter pseudethanolicus (strain ATCC 33223 / 39E) (Clostridium thermohydrosulfuricum).